Here is a 245-residue protein sequence, read N- to C-terminus: Ribonuclease PH (245 aa).

Phosphate-binding positions include R93 and 131 to 133 (GTR).

The protein belongs to the RNase PH family. Homohexameric ring arranged as a trimer of dimers.

It catalyses the reaction tRNA(n+1) + phosphate = tRNA(n) + a ribonucleoside 5'-diphosphate. In terms of biological role, phosphorolytic 3'-5' exoribonuclease that plays an important role in tRNA 3'-end maturation. Removes nucleotide residues following the 3'-CCA terminus of tRNAs; can also add nucleotides to the ends of RNA molecules by using nucleoside diphosphates as substrates, but this may not be physiologically important. Probably plays a role in initiation of 16S rRNA degradation (leading to ribosome degradation) during starvation. This chain is Ribonuclease PH, found in Corynebacterium glutamicum (strain ATCC 13032 / DSM 20300 / JCM 1318 / BCRC 11384 / CCUG 27702 / LMG 3730 / NBRC 12168 / NCIMB 10025 / NRRL B-2784 / 534).